The primary structure comprises 763 residues: Phosphoglycerol transferase I (763 aa).

The next 4 membrane-spanning stretches (helical) occupy residues 1 to 21, 26 to 46, 77 to 97, and 108 to 128; these read MSEL…AWKA, WWFA…ITLY, ILPG…LGWV, and FGYS…SPAF.

The protein belongs to the OpgB family.

The protein localises to the cell inner membrane. The enzyme catalyses a phosphatidylglycerol + a membrane-derived-oligosaccharide D-glucose = a 1,2-diacyl-sn-glycerol + a membrane-derived-oligosaccharide 6-(glycerophospho)-D-glucose.. The protein operates within glycan metabolism; osmoregulated periplasmic glucan (OPG) biosynthesis. Transfers a phosphoglycerol residue from phosphatidylglycerol to the membrane-bound nascent glucan backbones. In Citrobacter koseri (strain ATCC BAA-895 / CDC 4225-83 / SGSC4696), this protein is Phosphoglycerol transferase I.